A 473-amino-acid chain; its full sequence is Cannabinoid receptor 1 (473 aa).

Over 1–121 the chain is Extracellular; that stretch reads MKSILDGLAD…LNPSQQLAIA (121 aa). Residues 2-23 form a required for mitochondrial localization region; that stretch reads KSILDGLADTTFRTITTDLLYV. N-linked (GlcNAc...) asparagine glycans are attached at residues asparagine 78 and asparagine 84. A helical membrane pass occupies residues 122-142; that stretch reads VLSLTLGTFTVLENLLVLCVI. The Cytoplasmic segment spans residues 143-155; that stretch reads LHSRSLRCRPSYH. Residues 156–176 form a helical membrane-spanning segment; it reads FIGSLAVADLLGSVIFVYSFV. The Extracellular portion of the chain corresponds to 177–188; sequence DFHVFHRKDSPN. A helical transmembrane segment spans residues 189-209; sequence VFLFKLGGVTASFTASVGSLF. Residues 210 to 233 are Cytoplasmic-facing; sequence LTAIDRYISIHRPLAYKRIVTRPK. The chain crosses the membrane as a helical span at residues 234–254; sequence AVVAFCLMWTIAIVIAVLPLL. The Extracellular segment spans residues 255 to 278; that stretch reads GWNCKKLQSVCSDIFPLIDETYLM. The helical transmembrane segment at 279–299 threads the bilayer; the sequence is FWIGVTSVLLLFIVYAYMYIL. The Cytoplasmic portion of the chain corresponds to 300–345; the sequence is WKAHSHAVRMIQRGTQKSIIIHTSEDGKVQVTRPDQARMDIRLAKT. Residues 346–366 form a helical membrane-spanning segment; that stretch reads LVLILVVLIICWGPLLAIMVY. Residues 367 to 378 are Extracellular-facing; it reads DVFGKMNKLIKT. Residues 379–399 traverse the membrane as a helical segment; that stretch reads VFAFCSMLCLLNSTVNPIIYA. The Cytoplasmic portion of the chain corresponds to 400-473; sequence LRSKDLRHAF…VSTDTSAEAL (74 aa). Residue cysteine 416 is the site of S-palmitoyl cysteine attachment. A phosphoserine mark is found at serine 426 and serine 430.

The protein belongs to the G-protein coupled receptor 1 family. In terms of assembly, interacts (via C-terminus) with CNRIP1. Associates with G protein alpha subunits, including G(i) alpha-1/GNAI1, G(i) alpha-3/GNAI3 and G(o)-alpha/GNAO1; palmitoylation is important for interaction with GNAI3 and GNAO1. Post-translationally, palmitoylation at Cys-416 is important for recruitment at both plasma membrane and lipid rafts and association with G protein alpha subunits. Expressed in brain neurons (at protein level). Detected throughout the striatum, cortex and hippocampus, with highest levels in the lateral striatum. In rostral brain regions, high expression levels in the dorsal lateral striatum, while in the caudal brain regions, high levels are observed in the ventral lateral striatum. Expressed in neurons. In the hypothalamus, expressed in both GABAergic and glutamatergic presynaptic terminals of POMC neurons (at protein level). Expressed in striated muscles, including skeletal muscles (gastrocnemius and rectus abdominis) and myocardium (at protein level). Expressed in the liver, with highest levels in Kupffer cells and lower levels in endothelial cells as well as hepatocytes, particularly in perivascular areas (at protein level). The hepatic expression level is up-regulated in obese mice compared to lean animals.

It is found in the cell membrane. The protein resides in the mitochondrion outer membrane. The protein localises to the cell projection. It localises to the axon. Its subcellular location is the presynapse. With respect to regulation, hemopressin, a peptide derived from hemoglobin subunit alpha (HBA1 and/or HBA2), acts as an antagonist peptide: hemopressin-binding efficiently blocks cannabinoid receptor CNR1 and subsequent signaling. Functionally, G-protein coupled receptor for cannabinoids, including endocannabinoids (eCBs), such as N-arachidonoylethanolamide (also called anandamide or AEA) and 2-arachidonoylglycerol (2-AG). Mediates many cannabinoid-induced effects, acting, among others, on food intake, memory loss, gastrointestinal motility, catalepsy, ambulatory activity, anxiety, chronic pain. Signaling typically involves reduction in cyclic AMP. In the hypothalamus, may have a dual effect on mitochondrial respiration depending upon the agonist dose and possibly upon the cell type. Increases respiration at low doses, while decreases respiration at high doses. At high doses, CNR1 signal transduction involves G-protein alpha-i protein activation and subsequent inhibition of mitochondrial soluble adenylate cyclase, decrease in cyclic AMP concentration, inhibition of protein kinase A (PKA)-dependent phosphorylation of specific subunits of the mitochondrial electron transport system, including NDUFS2. In the hypothalamus, inhibits leptin-induced reactive oxygen species (ROS) formation and mediates cannabinoid-induced increase in SREBF1 and FASN gene expression. In response to cannabinoids, drives the release of orexigenic beta-endorphin, but not that of melanocyte-stimulating hormone alpha/alpha-MSH, from hypothalamic POMC neurons, hence promoting food intake. In the hippocampus, regulates cellular respiration and energy production in response to cannabinoids. Involved in cannabinoid-dependent depolarization-induced suppression of inhibition (DSI), a process in which depolarization of CA1 postsynaptic pyramidal neurons mobilizes eCBs, which retrogradely activate presynaptic CB1 receptors, transiently decreasing GABAergic inhibitory neurotransmission. Also reduces excitatory synaptic transmission. In superior cervical ganglions and cerebral vascular smooth muscle cells, inhibits voltage-gated Ca(2+) channels in a constitutive, as well as agonist-dependent manner. In cerebral vascular smooth muscle cells, cannabinoid-induced inhibition of voltage-gated Ca(2+) channels leads to vasodilation and decreased vascular tone. Induces leptin production in adipocytes and reduces LRP2-mediated leptin clearance in the kidney, hence participating in hyperleptinemia. In adipose tissue, CNR1 signaling leads to increased expression of SREBF1, ACACA and FASN genes. In the liver, activation by endocannabinoids leads to increased de novo lipogenesis and reduced fatty acid catabolism, associated with increased expression of SREBF1/SREBP-1, GCK, ACACA, ACACB and FASN genes. May also affect de novo cholesterol synthesis and HDL-cholesteryl ether uptake. Peripherally modulates energy metabolism. In high carbohydrate diet-induced obesity, may decrease the expression of mitochondrial dihydrolipoyl dehydrogenase/DLD in striated muscles, as well as that of selected glucose/ pyruvate metabolic enzymes, hence affecting energy expenditure through mitochondrial metabolism. In response to cannabinoid anandamide, elicits a pro-inflammatory response in macrophages, which involves NLRP3 inflammasome activation and IL1B and IL18 secretion. In macrophages infiltrating pancreatic islets, this process may participate in the progression of type-2 diabetes and associated loss of pancreatic beta-cells. The chain is Cannabinoid receptor 1 (Cnr1) from Mus musculus (Mouse).